A 282-amino-acid chain; its full sequence is F-box protein VBF (282 aa).

Positions 1–44 (MMMLPEACIANILAFTSPADAFSSSEVSSVFRLAGDSDFVWEKF) constitute an F-box domain.

In terms of assembly, component of SCF(VBF) E3 ubiquitin ligase complex that interacts with VIP1. Interacts directly with SKP1A and VIP1. Forms a complex composed of VIP1, VBF and Agrobacterium virE2.

In terms of biological role, component of SCF(VBF) E3 ubiquitin ligase complexes, which mediate the ubiquitination and subsequent proteasomal degradation of target proteins such as VIP1 and Agrobacterium virE2, after their implication in T-DNA translocation to the host nucleus (can functionally replace Agrobacterium VirF). Required during Agrobacterium-induced tumor formation. In Arabidopsis thaliana (Mouse-ear cress), this protein is F-box protein VBF (VBF).